The primary structure comprises 102 residues: MYAIIETGGKQIKVEAGQEIYVEKLAGEVGDVVTFDKVLFVGGDSAKVGVPFVEGATVTAKVEKQGRAKKLTVYKYKPKKNYHKKQGHRQPYTKLTIDAINA.

The protein belongs to the bacterial ribosomal protein bL21 family. As to quaternary structure, part of the 50S ribosomal subunit. Contacts protein L20.

This protein binds to 23S rRNA in the presence of protein L20. This Listeria monocytogenes serotype 4b (strain F2365) protein is Large ribosomal subunit protein bL21.